The following is a 3433-amino-acid chain: Genome polyprotein (3433 aa).

The interval 2–15 (SKKPGGPGKSRAVN) is interaction with host EXOC1. Residues 2–105 (SKKPGGPGKS…NRRSSKQKKR (104 aa)) are Cytoplasmic-facing. The segment at 37–72 (LIDGRGPTRFVLALLAFFRFTAIAPTRAVLDRWRSV) is hydrophobic; homodimerization of capsid protein C. Positions 106 to 123 (GGKTGIAFMIGLIAGVGA) are cleaved as a propeptide — ER anchor for the capsid protein C, removed in mature form by serine protease NS3. Residues 106–126 (GGKTGIAFMIGLIAGVGAVTL) traverse the membrane as a helical segment. Residues 127–248 (SNFQGKVMMT…KATRYLVKTE (122 aa)) are Extracellular-facing. N-linked (GlcNAc...) asparagine; by host glycosylation occurs at N138. Residues 249–269 (SWILRNPGYALVAAVIGWMLG) form a helical membrane-spanning segment. Topologically, residues 270 to 273 (SNTM) are cytoplasmic. A helical membrane pass occupies residues 274-290 (QRVVFAVLLLLVAPAYS). Residues 291–743 (FNCLGMSNRD…QVFGGAFRSL (453 aa)) are Extracellular-facing. Intrachain disulfides connect C293/C320, C350/C406, C364/C395, and C382/C411. A fusion peptide region spans residues 388–401 (DRGWGNGCGLFGKG). N444 carries N-linked (GlcNAc...) asparagine; by host glycosylation. 2 disulfides stabilise this stretch: C480/C578 and C595/C626. Residues 744-764 (FGGMSWITQGLLGALLLWMGI) traverse the membrane as a helical segment. Topologically, residues 765–770 (NARDRS) are cytoplasmic. The chain crosses the membrane as a helical span at residues 771 to 791 (IALTFLAVGGVLLFLSVNVHA). The Extracellular segment spans residues 792 to 1216 (DTGCAIDISR…AFAESNSGGD (425 aa)). Disulfide bonds link C795-C806 and C846-C934. 3 N-linked (GlcNAc...) asparagine; by host glycosylation sites follow: N921, N966, and N998. 4 disulfides stabilise this stretch: C970–C1014, C1071–C1120, C1082–C1103, and C1104–C1107. A helical transmembrane segment spans residues 1217–1237 (VVHLALMATFKIQPVFMVASF). The Cytoplasmic portion of the chain corresponds to 1238–1247 (LKARWTNQEN). A helical transmembrane segment spans residues 1248 to 1268 (ILLMLAAAFFQMAYYDARQIL). Residues 1269 to 1288 (LWEMPDVLNSLAVAWMILRA) lie on the Lumenal side of the membrane. The chain crosses the membrane as a helical span at residues 1289–1309 (ITFTTTSNVVVPLLALLTPGL). At 1310–1316 (RCLNLDV) the chain is on the cytoplasmic side. Residues 1317–1335 (YRILLLMVGIGSLIREKRS) traverse the membrane as a helical segment. The Lumenal segment spans residues 1336 to 1345 (AAAKKKGASL). The chain crosses the membrane as a helical span at residues 1346-1366 (LCLALASTGFFNPMILAAGLV). The Cytoplasmic portion of the chain corresponds to 1367-1375 (ACDPNRKRG). The helical transmembrane segment at 1376–1396 (WPATEVMTAVGLMFAIVGGLA) threads the bilayer. The Lumenal portion of the chain corresponds to 1397-1399 (ELD). Residues 1400–1420 (IDSMAIPMTIAGLMFAAFVIS) traverse the membrane as a helical segment. The Cytoplasmic portion of the chain corresponds to 1421–1477 (GKSTDMWIERTADISWEGDAEITGSSERVDVRLDDDGNFQLMNDPGAPWKIWMLRMA). The interval 1428–1467 (IERTADISWEGDAEITGSSERVDVRLDDDGNFQLMNDPGA) is interacts with and activates NS3 protease. Positions 1478-1498 (CLAISAYTPWAILPSVVGFWI) form an intramembrane region, helical. At 1499-2174 (TLQYTKRGGV…RMALEELPDA (676 aa)) the chain is on the cytoplasmic side. The Peptidase S7 domain occupies 1506–1683 (GGVLWDTPSP…ERMDEPVPAG (178 aa)). Active-site charge relay system; for serine protease NS3 activity residues include H1556, D1580, and S1640. The 157-residue stretch at 1686-1842 (PEMLRKKQIT…ESNAPISDLQ (157 aa)) folds into the Helicase ATP-binding domain. The tract at residues 1690–1693 (RKKQ) is important for RNA-binding. 1699–1706 (LHPGAGKT) provides a ligand contact to ATP. The short motif at 1790 to 1793 (DEAH) is the DEAH box element. The 166-residue stretch at 1853 to 2018 (GYEWITEYIG…GLIAQFYQPE (166 aa)) folds into the Helicase C-terminal domain. Position 1894 is an N6-acetyllysine; by host (K1894). Residues 2169–2173 (EELPD) are regulates the ATPase activity of NS3 helicase. Residues 2175-2195 (LQTIALIALLSVMTMGVFFLL) traverse the membrane as a helical segment. The Lumenal portion of the chain corresponds to 2196–2200 (MQRKG). Residues 2201–2221 (IGKIGLGGVVLGAATFFCWMA) constitute an intramembrane region (helical). A topological domain (lumenal) is located at residue E2222. A helical transmembrane segment spans residues 2223-2243 (VPGTKIAGMLLLSLLLMIVLI). Residues 2244–2258 (PEPEKQRSQTDNQLA) lie on the Cytoplasmic side of the membrane. Residues 2259 to 2273 (VFLICVLTLVGAVAA) traverse the membrane as a helical segment. The Lumenal segment spans residues 2274–2312 (NEMGWLDKTKSDISGLFGQRIETKENFSIGEFLLDLRPA). The segment at residues 2313–2333 (TAWSLYAVTTAVLTPLLKHLI) is an intramembrane region (helical). Residues 2334–2380 (TSDYITTSLTSINVQASALFTLARGFPFVDVGVSALLLAAGCWGQVT) are Lumenal-facing. The helical transmembrane segment at 2381–2401 (LTVTVTSATLLFCHYAYMVPG) threads the bilayer. Residues 2402–2444 (WQAEAMRSAQRRTAAGIMKNAVVDGIVATDVPELERTTPIMQK) are Cytoplasmic-facing. Residues 2445–2465 (KVGQVMLILVSLAALVVNPSV) form a helical membrane-spanning segment. Residues 2466–2470 (KTVRE) lie on the Lumenal side of the membrane. A helical transmembrane segment spans residues 2471–2491 (AGILITAAAVTLWENGASSVW). Residues 2492-3433 (NATTAIGLCH…DTTLVEDTVL (942 aa)) are Cytoplasmic-facing. Positions 2529–2794 (GGAKGRTLGE…DVNLGSGTRA (266 aa)) constitute an mRNA cap 0-1 NS5-type MT domain. S2584 contributes to the S-adenosyl-L-methionine binding site. S2584 bears the Phosphoserine mark. K2589 serves as the catalytic For 2'-O-MTase activity. Residues G2614, W2615, T2632, K2633, D2659, and V2660 each contribute to the S-adenosyl-L-methionine site. D2674 acts as the For 2'-O-MTase activity in catalysis. Residue I2675 participates in S-adenosyl-L-methionine binding. Catalysis depends on for 2'-O-MTase activity residues K2710 and E2746. Residue Y2748 coordinates S-adenosyl-L-methionine. Positions 2917–2919 (REK) match the Nuclear localization signal motif. Positions 2968, 2972, 2977, and 2980 each coordinate Zn(2+). Residues 3058-3210 (GRIYADDTAG…KPLDDRFATS (153 aa)) enclose the RdRp catalytic domain. Zn(2+) contacts are provided by H3245, C3261, and C3380. The PDZ-binding signature appears at 3431-3433 (TVL).

This sequence in the N-terminal section; belongs to the class I-like SAM-binding methyltransferase superfamily. mRNA cap 0-1 NS5-type methyltransferase family. Homodimer; further assembles as a homotetramer. Interacts (via N-terminus) with host EXOC1 (via C-terminus); this interaction results in EXOC1 degradation through the proteasome degradation pathway. As to quaternary structure, forms heterodimers with envelope protein E in the endoplasmic reticulum and Golgi. In terms of assembly, homodimer; in the endoplasmic reticulum and Golgi. Interacts with protein prM. Interacts with non-structural protein 1. Homodimer; Homohexamer when secreted. Interacts with envelope protein E. NS1 interacts with NS4B. Interacts with host complement protein CFH; this interaction leads to the degradation of C3. As to quaternary structure, interacts (via N-terminus) with serine protease NS3. In terms of assembly, forms a heterodimer with serine protease NS3. May form homooligomers. Forms a heterodimer with NS2B. Interacts with non-structural protein 2A (via N-terminus). Interacts with NS4B. Interacts with unphosphorylated RNA-directed RNA polymerase NS5; this interaction stimulates RNA-directed RNA polymerase NS5 guanylyltransferase activity. As to quaternary structure, interacts with Serine protease/Helicase NS3. Interacts with NS1. In terms of assembly, homodimer. Interacts with host STAT2; this interaction inhibits the phosphorylation of the latter, and, when all viral proteins are present (polyprotein), targets STAT2 for degradation. Interacts with serine protease NS3. In terms of processing, specific enzymatic cleavages in vivo yield mature proteins. Cleavages in the lumen of endoplasmic reticulum are performed by host signal peptidase, whereas cleavages in the cytoplasmic side are performed by serine protease NS3. Signal cleavage at the 2K-4B site requires a prior NS3 protease-mediated cleavage at the 4A-2K site. Post-translationally, cleaved in post-Golgi vesicles by a host furin, releasing the mature small envelope protein M, and peptide pr. This cleavage is incomplete as up to 30% of viral particles still carry uncleaved prM. N-glycosylated. In terms of processing, N-glycosylated. The excreted form is glycosylated and this is required for efficient secretion of the protein from infected cells. Post-translationally, acetylated by host KAT5. Acetylation modulates NS3 RNA-binding and unwinding activities and plays an important positive role for viral replication. Phosphorylated on serines residues. This phosphorylation may trigger NS5 nuclear localization.

The protein localises to the virion. It is found in the host nucleus. The protein resides in the host cytoplasm. It localises to the host perinuclear region. Its subcellular location is the secreted. The protein localises to the virion membrane. It is found in the host endoplasmic reticulum membrane. The enzyme catalyses Selective hydrolysis of -Xaa-Xaa-|-Yaa- bonds in which each of the Xaa can be either Arg or Lys and Yaa can be either Ser or Ala.. It carries out the reaction RNA(n) + a ribonucleoside 5'-triphosphate = RNA(n+1) + diphosphate. The catalysed reaction is a ribonucleoside 5'-triphosphate + H2O = a ribonucleoside 5'-diphosphate + phosphate + H(+). It catalyses the reaction ATP + H2O = ADP + phosphate + H(+). The enzyme catalyses a 5'-end (5'-triphosphoguanosine)-ribonucleoside in mRNA + S-adenosyl-L-methionine = a 5'-end (N(7)-methyl 5'-triphosphoguanosine)-ribonucleoside in mRNA + S-adenosyl-L-homocysteine. It carries out the reaction a 5'-end (N(7)-methyl 5'-triphosphoguanosine)-ribonucleoside in mRNA + S-adenosyl-L-methionine = a 5'-end (N(7)-methyl 5'-triphosphoguanosine)-(2'-O-methyl-ribonucleoside) in mRNA + S-adenosyl-L-homocysteine + H(+). Functionally, plays a role in virus budding by binding to the cell membrane and gathering the viral RNA into a nucleocapsid that forms the core of a mature virus particle. During virus entry, may induce genome penetration into the host cytoplasm after hemifusion induced by the surface proteins. Can migrate to the cell nucleus where it modulates host functions. Overcomes the anti-viral effects of host EXOC1 by sequestering and degrading the latter through the proteasome degradation pathway. In terms of biological role, inhibits RNA silencing by interfering with host Dicer. Prevents premature fusion activity of envelope proteins in trans-Golgi by binding to envelope protein E at pH6.0. After virion release in extracellular space, gets dissociated from E dimers. Its function is as follows. Acts as a chaperone for envelope protein E during intracellular virion assembly by masking and inactivating envelope protein E fusion peptide. prM is the only viral peptide matured by host furin in the trans-Golgi network probably to avoid catastrophic activation of the viral fusion activity in acidic Golgi compartment prior to virion release. prM-E cleavage is inefficient, and many virions are only partially matured. These uncleaved prM would play a role in immune evasion. Functionally, may play a role in virus budding. Exerts cytotoxic effects by activating a mitochondrial apoptotic pathway through M ectodomain. May display a viroporin activity. In terms of biological role, binds to host cell surface receptor and mediates fusion between viral and cellular membranes. Envelope protein is synthesized in the endoplasmic reticulum in the form of heterodimer with protein prM. They play a role in virion budding in the ER, and the newly formed immature particle is covered with 60 spikes composed of heterodimer between precursor prM and envelope protein E. The virion is transported to the Golgi apparatus where the low pH causes dissociation of PrM-E heterodimers and formation of E homodimers. prM-E cleavage is inefficient, and many virions are only partially matured. These uncleaved prM would play a role in immune evasion. Involved in immune evasion, pathogenesis and viral replication. Once cleaved off the polyprotein, is targeted to three destinations: the viral replication cycle, the plasma membrane and the extracellular compartment. Essential for viral replication. Required for formation of the replication complex and recruitment of other non-structural proteins to the ER-derived membrane structures. Excreted as a hexameric lipoparticle that plays a role against host immune response. Antagonizing the complement function. Binds to the host macrophages and dendritic cells. Inhibits signal transduction originating from Toll-like receptor 3 (TLR3). Its function is as follows. Component of the viral RNA replication complex that functions in virion assembly and antagonizes the host alpha/beta interferon antiviral response. Inhibits STAT2 translocation in the nucleus after IFN-alpha treatment. Functionally, required cofactor for the serine protease function of NS3. May have membrane-destabilizing activity and form viroporins. Inhibits STAT2 translocation in the nucleus after IFN-alpha treatment. In terms of biological role, displays three enzymatic activities: serine protease, NTPase and RNA helicase. NS3 serine protease, in association with NS2B, performs its autocleavage and cleaves the polyprotein at dibasic sites in the cytoplasm: C-prM, NS2A-NS2B, NS2B-NS3, NS3-NS4A, NS4A-2K and NS4B-NS5. NS3 RNA helicase binds RNA and unwinds dsRNA in the 3' to 5' direction. NS3 supports the separation of RNA daughter and template strands during viral replication. The helicase part is involved in the inhibition of phosphorylation of host STAT1, and thereby inhibition of host type-I IFN signaling. In addition, NS3 assists the initiation of replication by unwinding the RNA secondary structure in the 3' non-translated region (NTR). Inhibits STAT2 translocation in the nucleus after IFN-alpha treatment. Regulates the ATPase activity of the NS3 helicase activity. NS4A allows NS3 helicase to conserve energy during unwinding. Induces host ER membrane rearrangements to provide a compartment where viral replication can take part. Inhibits STAT2 translocation in the nucleus after IFN-alpha treatment. Its function is as follows. Functions as a signal peptide for NS4B and is required for the interferon antagonism activity of the latter. Functionally, induces the formation of ER-derived membrane vesicles where the viral replication takes place. Inhibits interferon (IFN)-induced host STAT1 phosphorylation and nuclear translocation, thereby preventing the establishment of cellular antiviral state by blocking the IFN-alpha/beta pathway. Inhibits STAT2 translocation in the nucleus after IFN-alpha treatment. In terms of biological role, replicates the viral (+) and (-) genome, and performs the capping of genomes in the cytoplasm. NS5 methylates viral RNA cap at guanine N-7 and ribose 2'-O positions. Besides its role in genome replication, also prevents the establishment of cellular antiviral state by blocking the interferon-alpha/beta (IFN-alpha/beta) signaling pathway. Inhibits host JAK1 and TYK2 phosphorylation, thereby preventing activation of JAK-STAT signaling pathway. May transcriptionally regulate host genes involved in antiviral response when localized in the nucleus. This Ciconiiformes (storks and others) protein is Genome polyprotein.